A 434-amino-acid polypeptide reads, in one-letter code: Nicotinate phosphoribosyltransferase (434 aa).

Position 242 is a phosphohistidine; by autocatalysis (His242).

Belongs to the NAPRTase family. Post-translationally, transiently phosphorylated on a His residue during the reaction cycle. Phosphorylation strongly increases the affinity for substrates and increases the rate of nicotinate D-ribonucleotide production. Dephosphorylation regenerates the low-affinity form of the enzyme, leading to product release.

The catalysed reaction is nicotinate + 5-phospho-alpha-D-ribose 1-diphosphate + ATP + H2O = nicotinate beta-D-ribonucleotide + ADP + phosphate + diphosphate. Its pathway is cofactor biosynthesis; NAD(+) biosynthesis; nicotinate D-ribonucleotide from nicotinate: step 1/1. Catalyzes the synthesis of beta-nicotinate D-ribonucleotide from nicotinate and 5-phospho-D-ribose 1-phosphate at the expense of ATP. In Bradyrhizobium diazoefficiens (strain JCM 10833 / BCRC 13528 / IAM 13628 / NBRC 14792 / USDA 110), this protein is Nicotinate phosphoribosyltransferase.